The following is a 157-amino-acid chain: 17.6 kDa class I heat shock protein 3 (157 aa).

Positions 43-157 (DVAAFTNAKV…PEVKSIDISG (115 aa)) constitute a sHSP domain.

Belongs to the small heat shock protein (HSP20) family. In terms of assembly, may form oligomeric structures.

Its subcellular location is the cytoplasm. This chain is 17.6 kDa class I heat shock protein 3 (HSP17.6C), found in Arabidopsis thaliana (Mouse-ear cress).